The chain runs to 732 residues: uncharacterized protein (732 aa).

The next 2 membrane-spanning stretches (helical) occupy residues tyrosine 687–leucine 707 and glycine 712–serine 732.

It belongs to the FadG family.

The protein localises to the cell membrane. This is an uncharacterized protein from Bacillus subtilis (strain 168).